The primary structure comprises 756 residues: Nucleomorphin (756 aa).

Polar residues predominate over residues M1–S10. The segment at M1–S113 is disordered. Composition is skewed to low complexity over residues N16–S66 and N75–N94. Residues G95 to S113 are compositionally biased toward polar residues. The 93-residue stretch at L124–V216 folds into the BRCT domain. 4 disordered regions span residues N229–Q251, P272–E298, K359–N403, and T422–L463. Composition is skewed to low complexity over residues L285–E298, N364–K401, and T422–S432. The segment covering K448–H459 has biased composition (basic residues). Positions K464–K480 match the Nuclear localization signal motif. The interval A495–K512 is calmodulin binding. The span at S514–I529 shows a compositional bias: polar residues. A disordered region spans residues S514 to E587. Residues Y536 to E587 show a composition bias toward acidic residues. Residues D537 to D588 form a DEED region region. 2 calmodulin binding regions span residues V589–K606 and K596–H613. Disordered regions lie at residues H613–R639 and L660–I700. Residues L668 to T691 show a composition bias toward polar residues.

Interacts with calmodulin and CBPD1 in the presence of Ca(2+).

The protein localises to the nucleus. The chain is Nucleomorphin (numA) from Dictyostelium discoideum (Social amoeba).